The sequence spans 206 residues: dITP/XTP pyrophosphatase (206 aa).

7-12 is a binding site for substrate; that stretch reads SSHGYK. Asp-70 (proton acceptor) is an active-site residue. Residue Asp-70 coordinates Mg(2+). Residues Thr-71, 154–157, Lys-177, and 182–183 each bind substrate; these read FGYD and HR.

Belongs to the HAM1 NTPase family. In terms of assembly, homodimer. It depends on Mg(2+) as a cofactor.

It catalyses the reaction XTP + H2O = XMP + diphosphate + H(+). The enzyme catalyses dITP + H2O = dIMP + diphosphate + H(+). It carries out the reaction ITP + H2O = IMP + diphosphate + H(+). In terms of biological role, pyrophosphatase that catalyzes the hydrolysis of nucleoside triphosphates to their monophosphate derivatives, with a high preference for the non-canonical purine nucleotides XTP (xanthosine triphosphate), dITP (deoxyinosine triphosphate) and ITP. Seems to function as a house-cleaning enzyme that removes non-canonical purine nucleotides from the nucleotide pool, thus preventing their incorporation into DNA/RNA and avoiding chromosomal lesions. This Chlamydia pneumoniae (Chlamydophila pneumoniae) protein is dITP/XTP pyrophosphatase.